The primary structure comprises 72 residues: ATP synthase subunit L (72 aa).

As to quaternary structure, F-type ATP synthases have 2 components, the catalytic core F(1) and the membrane-embedded component F(0), linked together by a central stalk and a peripheral stalk. The central stalk, also called rotor shaft, is often seen as part of F(1). The peripheral stalk is seen as part of F(0). F(0) contains the membrane channel next to the rotor. F-type ATP synthases form dimers but each monomer functions independently in ATP generation. The dimer consists of 18 different polypeptides: ATP1 (subunit alpha, part of F(1), 3 molecules per monomer), ATP2 (subunit beta, part of F(1), 3 molecules per monomer), ATP3 (subunit gamma, part of the central stalk), ATP4 (subunit b, part of the peripheral stalk), ATP5/OSCP (subunit 5/OSCP, part of the peripheral stalk), ATP6 (subunit a, part of the peripheral stalk), ATP7 (subunit d, part of the peripheral stalk), ATP8 (subunit 8, part of the peripheral stalk), OLI1 (subunit c, part of the rotor, 10 molecules per monomer), ATP14 (subunit h, part of the peripheral stalk), ATP15 (subunit epsilon, part of the central stalk), ATP16 (subunit delta, part of the central stalk), ATP17 (subunit f, part of the peripheral stalk), ATP18 (subunit i/j, part of the peripheral stalk). Dimer-specific subunits are ATP19 (subunit k, at interface between monomers), ATP20 (subunit g, at interface between monomers), TIM11 (subunit e, at interface between monomers). Also contains subunit L.

The protein resides in the mitochondrion inner membrane. In terms of biological role, mitochondrial membrane ATP synthase (F(1)F(0) ATP synthase or Complex V) produces ATP from ADP in the presence of a proton gradient across the membrane which is generated by electron transport complexes of the respiratory chain. F-type ATP synthases consist of two structural domains, F(1) - containing the extramembraneous catalytic core, and F(0) - containing the membrane proton channel, linked together by a central stalk and a peripheral stalk. During catalysis, ATP synthesis in the catalytic domain of F(1) is coupled via a rotary mechanism of the central stalk subunits to proton translocation. The chain is ATP synthase subunit L from Pichia angusta (Yeast).